The chain runs to 221 residues: uncharacterized protein (221 aa).

Residues 33 to 167 (RPAKSAVMLY…VSPGANLELL (135 aa)) form the MOSC domain.

This is an uncharacterized protein from Bacillus subtilis (strain 168).